We begin with the raw amino-acid sequence, 128 residues long: 3-aminoacrylate deaminase RutC (128 aa).

Belongs to the RutC family.

It carries out the reaction (Z)-3-aminoacrylate + H2O + H(+) = 3-oxopropanoate + NH4(+). Involved in pyrimidine catabolism. Catalyzes the deamination of 3-aminoacrylate to malonic semialdehyde, a reaction that can also occur spontaneously. RutC may facilitate the reaction and modulate the metabolic fitness, rather than catalyzing essential functions. This Enterobacter cloacae subsp. cloacae (strain ATCC 13047 / DSM 30054 / NBRC 13535 / NCTC 10005 / WDCM 00083 / NCDC 279-56) protein is 3-aminoacrylate deaminase RutC.